A 369-amino-acid chain; its full sequence is Gap junction alpha-5 protein (369 aa).

Residues 2–19 (GDWSFLGEFLEEVHKHST) lie on the Cytoplasmic side of the membrane. The chain crosses the membrane as a helical span at residues 20-40 (VVGKVWLTVLFIFRMLVLGTA). Residues 41–76 (AGPLWGDEQSDFMCDTQQPGCENVCYDKAFPISHVR) are Extracellular-facing. The helical transmembrane segment at 77–97 (FWVLQIIFVSTPSLVYMGHAM) threads the bilayer. The Cytoplasmic portion of the chain corresponds to 98-169 (HTVRMEEKRK…YSILIRTAME (72 aa)). A helical transmembrane segment spans residues 170–190 (IAFIVGQYILYGIFLETLYIC). Residues 191–210 (QRAPCPHPVNCYVSRPTEKN) lie on the Extracellular side of the membrane. Residues 211 to 231 (VFIIFMLAVAVLSLFLSLAEL) traverse the membrane as a helical segment. The Cytoplasmic segment spans residues 232-369 (YHLGWKKAKE…SKARSDDLSV (138 aa)). The tract at residues 347-369 (NEKRRFSKASRASSKARSDDLSV) is disordered.

The protein belongs to the connexin family. Alpha-type (group II) subfamily. A connexon is composed of a hexamer of connexins. In terms of tissue distribution, mostly in heart, and in the whole embryo, liver, stomach, and pectoral muscle.

Its subcellular location is the cell membrane. It is found in the cell junction. The protein resides in the gap junction. In terms of biological role, one gap junction consists of a cluster of closely packed pairs of transmembrane channels, the connexons, through which materials of low MW diffuse from one cell to a neighboring cell. The chain is Gap junction alpha-5 protein (GJA5) from Gallus gallus (Chicken).